A 317-amino-acid chain; its full sequence is Osteopontin (317 aa).

The first 16 residues, 1–16 (MRLAVVCFCLFGLASC), serve as a signal peptide directing secretion. Residues S26, S27, S60, S62, and S63 each carry the phosphoserine modification. A disordered region spans residues 43–297 (WLKPDPSQKQ…LVLDPKSKED (255 aa)). Residues 49 to 63 (SQKQNLLAPQNSVSS) are compositionally biased toward polar residues. T66 carries the phosphothreonine modification. A phosphoserine mark is found at S76, S78, S81, S106, S109, S112, S115, and S118. The segment covering 86 to 110 (DDDDDDDDDGDHAESEDSVNSDESD) has biased composition (acidic residues). O-linked (GalNAc...) threonine glycans are attached at residues T123, T132, and T137. Positions 144–146 (RGD) match the Cell attachment site motif. Residues T170 and T175 each carry the phosphothreonine modification. Residues 174 to 187 (LTSRMKSQESDEAI) are compositionally biased toward basic and acidic residues. Phosphoserine is present on residues S176, S180, S200, S204, S209, S213, and S219. The segment covering 197-216 (SVPSDQDSNGKTSHESSQLD) has biased composition (polar residues). Residue S219 is glycosylated (O-linked (Xyl...) (chondroitin sulfate) serine). T222 carries the post-translational modification Phosphothreonine. Basic and acidic residues-rich tracts occupy residues 223–240 (HSLEQSKEYKQRASHEST) and 248–263 (SAEKPDAIDSAERSDA). 14 positions are modified to phosphoserine: S224, S228, S257, S261, S266, S270, S273, S278, S283, S294, S306, S311, S313, and S314. Residues 273–297 (SLEHQSHEFHSHEDKLVLDPKSKED) show a composition bias toward basic and acidic residues. S311 carries an O-linked (Xyl...) (chondroitin sulfate) serine glycan.

It belongs to the osteopontin family. As to quaternary structure, interacts (via N-terminus) with integrin ITGA9:ITGB1. Post-translationally, extensively phosphorylated by FAM20C in the extracellular medium at multiple sites within the S-x-E/pS motif. The phosphorylated form inhibits hydroxyapatite crystallization. Dephosphorylation via a mechanism involving ALPL/TNAP promotes hydroxyapatite crystallization. O-glycosylated. In terms of processing, forms covalent cross-links mediated by transglutaminase TGM2, between a glutamine and the epsilon-amino group of a lysine residue, forming homopolymers and heteropolymers, increasing its collagen binding properties.

The protein localises to the secreted. Major non-collagenous bone protein that binds tightly to hydroxyapatite. Appears to form an integral part of the mineralized matrix. Probably important to cell-matrix interaction. In terms of biological role, acts as a cytokine involved in enhancing production of interferon-gamma and interleukin-12 and reducing production of interleukin-10 and is essential in the pathway that leads to type I immunity. This is Osteopontin (Spp1) from Rattus norvegicus (Rat).